The primary structure comprises 469 residues: Phenylalanine--tRNA ligase alpha subunit (469 aa).

Residues threonine 309, 348 to 350 (QLD), and phenylalanine 388 each bind L-phenylalanine. Position 390 (glutamate 390) interacts with Mg(2+).

The protein belongs to the class-II aminoacyl-tRNA synthetase family. Phe-tRNA synthetase alpha subunit type 2 subfamily. In terms of assembly, tetramer of two alpha and two beta subunits. Mg(2+) is required as a cofactor.

The protein localises to the cytoplasm. It carries out the reaction tRNA(Phe) + L-phenylalanine + ATP = L-phenylalanyl-tRNA(Phe) + AMP + diphosphate + H(+). The polypeptide is Phenylalanine--tRNA ligase alpha subunit (Sulfurisphaera tokodaii (strain DSM 16993 / JCM 10545 / NBRC 100140 / 7) (Sulfolobus tokodaii)).